A 970-amino-acid polypeptide reads, in one-letter code: Polycystin-2 (970 aa).

Polar residues predominate over residues 1–11; it reads MVNSSRVQPQQ. The interval 1-182 is disordered; that stretch reads MVNSSRVQPQ…GDPLHRHLPL (182 aa). Over 1–221 the chain is Cytoplasmic; it reads MVNSSRVQPQ…STDREKYLKS (221 aa). Low complexity predominate over residues 25-45; the sequence is GPGRLMAGGAIAGAGLAAPGG. Residues 47–60 show a composition bias toward basic and acidic residues; the sequence is REQRGLEIEMERIR. A compositionally biased stretch (low complexity) spans 62 to 83; sequence AAARDPPAGASASPSPPLSSCS. Ser-76 and Ser-80 each carry phosphoserine. The span at 95–109 shows a compositional bias: acidic residues; that stretch reads EAEEEEEEEEVEGEE. Low complexity predominate over residues 125–138; sequence RRSASSSAVSSAGA. Arg-139 carries the post-translational modification Omega-N-methylarginine. Gly residues predominate over residues 139–148; sequence RGRGLGGYHG. Residues 222-243 form a helical membrane-spanning segment; that stretch reads VLRELATYLLFLIVLCILTYGM. The Extracellular portion of the chain corresponds to 244 to 470; the sequence is MSSSVYYYTR…PVKLIRYVTT (227 aa). Residues Asn-301, Asn-307, and Asn-330 are each glycosylated (N-linked (GlcNAc...) asparagine). Cys-333 and Cys-346 are oxidised to a cystine. N-linked (GlcNAc...) asparagine glycans are attached at residues Asn-364 and Asn-377. A helical transmembrane segment spans residues 471-491; the sequence is FDFFLAACEIIFCLFILYYVV. Topologically, residues 492 to 507 are cytoplasmic; sequence EEILEIRIHKLHYFRS. The chain crosses the membrane as a helical span at residues 508-528; it reads FWNCLDVVIIVLSVVAIGINI. The Extracellular portion of the chain corresponds to 529 to 554; that stretch reads YRTSNVEALLQFLEDQNTFPNFENLA. A helical membrane pass occupies residues 555-575; it reads YWQTQFNNIAAVIVFFVWIKL. Cholesterol is bound at residue Gln-559. Residues 576–599 lie on the Cytoplasmic side of the membrane; it reads FKFINFNRTMSQLSTTMSRCAKDL. The chain crosses the membrane as a helical span at residues 600–621; the sequence is FGFAIMFFIIFLAYAQLAYLVF. The Extracellular portion of the chain corresponds to 622–633; it reads GTQVDDFSTFQE. An intramembrane region (pore-forming) is located at residues 634–648; the sequence is CIFTQFRIILGDINF. Leu-643 serves as a coordination point for Ca(2+). The Selectivity filter signature appears at 643–645; the sequence is LGD. Over 649-656 the chain is Extracellular; sequence AEIEEANR. A helical transmembrane segment spans residues 657–677; sequence VLGPIYFTTFVFFMFFILLNM. The Cytoplasmic portion of the chain corresponds to 678 to 970; sequence FLAIINDTYS…GGNGSANIHV (293 aa). Residues 750–785 enclose the EF-hand domain; the sequence is KGHTDAEIEAIFTKYDQDGDQELTEHEHQQMRDDLE. Ca(2+) is bound by residues Asp-765, Asp-767, Asp-769, Glu-771, and Glu-776. The tract at residues 766–833 is disordered; the sequence is QDGDQELTEH…HSSRRRGSIS (68 aa). The segment covering 772–797 has biased composition (basic and acidic residues); it reads LTEHEHQQMRDDLEKEREDLDLDHSS. Residues 798-809 are compositionally biased toward low complexity; that stretch reads LPRPMSSRSFPR. Ser-803, Ser-810, Ser-814, and Ser-831 each carry phosphoserine. The linker stretch occupies residues 805-824; the sequence is RSFPRSLDDSEEEDDDDSGH. Positions 812–823 are important for interaction with PACS1 and PACS2; the sequence is DDSEEEDDDDSG. Residues 835–874 adopt a coiled-coil conformation; it reads GVSYEEFQVLVRRVDRMEHSIGSIVSKIDAVIVKLEIMER. The disordered stretch occupies residues 921–970; the sequence is DDAASQISHGLGTPLGLNGQPRPRSSRPSSSQSTEGMEGGGGNGSANIHV. Residues 940–956 show a composition bias toward low complexity; sequence QPRPRSSRPSSSQSTEG.

It belongs to the polycystin family. Homotetramer. Component of the heterotetrameric polycystin channel complex with PKD1; the tetramer contains one PKD1 chain and three PKD2 chains. Isoform 1 interacts with PKD1 while isoform 3 does not. Interacts with PKD1L1; probably forms a Ca(2+) channel. Interacts with CD2AP. Interacts with HAX1. Interacts with NEK8. Part of a complex containing AKAP5, ADCY5, ADCY6 and PDE4C. Interacts (via C-terminus) with TRPV4 (via C-terminus). Interacts (via C-terminal acidic region) with PACS1 and PACS2; these interactions retain the protein in the endoplasmic reticulum and prevent trafficking to the cell membrane. Interacts with TMEM33. Form a heterotetramer with TRPC1 with a 2:2 stoichiometry; has distinct channel properties separate from PKD2 or TRPC1 homomers alone. Interacts with TMEM120A; TMEM120A inhibits PKD2 channel activity through the physical association of PKD2 with TMEM120A. Interacts (via N-terminus) with RYR2; regulates RYR2 channel activity. N-glycosylated. The four subunits in a tetramer probably differ in the extent of glycosylation; simultaneous glycosylation of all experimentally validated sites would probably create steric hindrance. Post-translationally, phosphorylated. Phosphorylation is important for protein function; a mutant that lacks the N-terminal phosphorylation sites cannot complement a zebrafish pkd2-deficient mutant. PKD-mediated phosphorylation at the C-terminus regulates its function in the release of Ca(2+) stores from the endoplasmic reticulum. Phosphorylation at Ser-814 regulates PKD2 trafficking. Phosphorylation at Ser-76 is required for PKD2 trafficking to or retention at the lateral plasma membrane. Phosphorylation at Ser-803, Ser-814 and Ser-831 regulates PKD2 channel activity. In terms of processing, sumoylated by SUMO1; sumoylation regulates PKD2 membrane recycling and is necessary for intravascular pressure-induced arterial contractility. Expressed in mesenchymally derived structures in the developing embryo at day 12.5. In adult, mostly expressed in kidney.

Its subcellular location is the cell projection. The protein resides in the cilium membrane. It is found in the endoplasmic reticulum membrane. The protein localises to the cell membrane. It localises to the basolateral cell membrane. Its subcellular location is the cytoplasmic vesicle membrane. The protein resides in the golgi apparatus. It is found in the vesicle. The protein localises to the secreted. It localises to the extracellular exosome. It carries out the reaction K(+)(in) = K(+)(out). The catalysed reaction is Na(+)(in) = Na(+)(out). It catalyses the reaction Ca(2+)(in) = Ca(2+)(out). Channel activity is regulated by phosphorylation. Channel activity is regulated by intracellular Ca(2+). At the endoplasmic reticulum membrane (ER), TMEM33 enhances its channel activity. TMEM120A inhibits the channel activity of PKD2, and mediates mechanosensitivity of the PKD2-TMEM120A channel complex. PKD1/PKD2 complex on the plasma membrane is activated by PKD1 N-terminus. Functionally, forms a nonselective cation channel. Can function as a homotetrameric ion channel or can form heteromer with PKD1. Displays distinct function depending on its subcellular localization and regulation by its binding partners. Functions as a cation channel, with a preference for monovalent cations over divalent cations that allows K(+), Na(+) and Ca(2+) influx, with low selectivity for Ca(2+). Involved in fluid-flow mechanosensation in the primary cilium in renal epithelium. In the endoplasmic reticulum, likely functions as a K(+) channel to facilitate Ca(2+) release. The heterotetrameric PKD1/PKD2 channel has higher Ca(2+) permeability than homomeric PKD2 channel and acts as a primarily Ca(2+)-permeable channel. Interacts with and acts as a regulator of a number of other channels, such as TRPV4, TRPC1, IP3R, RYR2, ultimately further affecting intracellular signaling, to modulate intracellular Ca(2+) signaling. Together with TRPV4, forms mechano- and thermosensitive channels in cilium. In cardiomyocytes, PKD2 modulates Ca(2+) release from stimulated RYR2 receptors through direct association. Also involved in left-right axis specification via its role in sensing nodal flow; forms a complex with PKD1L1 in cilia to facilitate flow detection in left-right patterning. Acts as a regulator of cilium length together with PKD1. Mediates systemic blood pressure and contributes to the myogenic response in cerebral arteries though vasoconstriction. This Bos taurus (Bovine) protein is Polycystin-2.